Reading from the N-terminus, the 500-residue chain is Cytosol aminopeptidase (500 aa).

Mn(2+) contacts are provided by K265 and D270. K277 is a catalytic residue. D288, D347, and E349 together coordinate Mn(2+). R351 is an active-site residue.

This sequence belongs to the peptidase M17 family. Mn(2+) is required as a cofactor.

It is found in the cytoplasm. The catalysed reaction is Release of an N-terminal amino acid, Xaa-|-Yaa-, in which Xaa is preferably Leu, but may be other amino acids including Pro although not Arg or Lys, and Yaa may be Pro. Amino acid amides and methyl esters are also readily hydrolyzed, but rates on arylamides are exceedingly low.. The enzyme catalyses Release of an N-terminal amino acid, preferentially leucine, but not glutamic or aspartic acids.. Presumably involved in the processing and regular turnover of intracellular proteins. Catalyzes the removal of unsubstituted N-terminal amino acids from various peptides. In Rickettsia prowazekii (strain Madrid E), this protein is Cytosol aminopeptidase (pepA).